A 325-amino-acid polypeptide reads, in one-letter code: Taste receptor type 2 member 7 (325 aa).

Over Met1–Leu9 the chain is Extracellular. Residues Leu10–Val30 traverse the membrane as a helical segment. Topologically, residues Asn31–Arg55 are cytoplasmic. The chain crosses the membrane as a helical span at residues Ile56–Tyr76. Residues Ala77–His94 are Extracellular-facing. A helical transmembrane segment spans residues Leu95–Phe115. At His116–Arg128 the chain is on the cytoplasmic side. Residues Val129–Thr149 form a helical membrane-spanning segment. Residues Glu150–Asn187 lie on the Extracellular side of the membrane. Asn167 and Asn175 each carry an N-linked (GlcNAc...) asparagine glycan. A helical transmembrane segment spans residues Leu188 to Leu208. The Cytoplasmic segment spans residues Arg209–Lys235. A helical transmembrane segment spans residues Ala236 to Ser256. Residues Ser257–Ala266 are Extracellular-facing. A helical membrane pass occupies residues Val267 to Leu287. The Cytoplasmic portion of the chain corresponds to Gly288–Gly319.

It belongs to the G-protein coupled receptor T2R family.

Its subcellular location is the membrane. In terms of biological role, gustducin-coupled receptor implicated in the perception of bitter compounds in the oral cavity and the gastrointestinal tract. Signals through PLCB2 and the calcium-regulated cation channel TRPM5. This chain is Taste receptor type 2 member 7 (TAS2R7), found in Pan paniscus (Pygmy chimpanzee).